The following is a 240-amino-acid chain: Uridylate kinase (240 aa).

13-16 contacts ATP; the sequence is KLSG. Positions 21 to 26 are involved in allosteric activation by GTP; that stretch reads GDDGFG. Residue Gly55 coordinates UMP. ATP is bound by residues Gly56 and Arg60. UMP is bound by residues Asp75 and 136–143; that span reads IGNPYFST. ATP contacts are provided by Asn164, Tyr170, and Asp173.

It belongs to the UMP kinase family. In terms of assembly, homohexamer.

It is found in the cytoplasm. The enzyme catalyses UMP + ATP = UDP + ADP. It functions in the pathway pyrimidine metabolism; CTP biosynthesis via de novo pathway; UDP from UMP (UMPK route): step 1/1. Allosterically activated by GTP. Inhibited by UTP. Functionally, catalyzes the reversible phosphorylation of UMP to UDP. This chain is Uridylate kinase, found in Staphylococcus saprophyticus subsp. saprophyticus (strain ATCC 15305 / DSM 20229 / NCIMB 8711 / NCTC 7292 / S-41).